The sequence spans 337 residues: GTP 3',8-cyclase (337 aa).

A Radical SAM core domain is found at 1-226 (MNRVDYLRIS…REKIRQKWGL (226 aa)). Arginine 8 is a binding site for GTP. Positions 15 and 19 each coordinate [4Fe-4S] cluster. Tyrosine 21 is an S-adenosyl-L-methionine binding site. Position 22 (cysteine 22) interacts with [4Fe-4S] cluster. Arginine 60 is a GTP binding site. Glycine 64 provides a ligand contact to S-adenosyl-L-methionine. Position 91 (threonine 91) interacts with GTP. An S-adenosyl-L-methionine-binding site is contributed by serine 115. Lysine 155 lines the GTP pocket. Methionine 189 contributes to the S-adenosyl-L-methionine binding site. 2 residues coordinate [4Fe-4S] cluster: cysteine 260 and cysteine 263. 265-267 (RMR) lines the GTP pocket. Position 277 (cysteine 277) interacts with [4Fe-4S] cluster.

This sequence belongs to the radical SAM superfamily. MoaA family. Monomer and homodimer. The cofactor is [4Fe-4S] cluster.

The enzyme catalyses GTP + AH2 + S-adenosyl-L-methionine = (8S)-3',8-cyclo-7,8-dihydroguanosine 5'-triphosphate + 5'-deoxyadenosine + L-methionine + A + H(+). It functions in the pathway cofactor biosynthesis; molybdopterin biosynthesis. Catalyzes the cyclization of GTP to (8S)-3',8-cyclo-7,8-dihydroguanosine 5'-triphosphate. This chain is GTP 3',8-cyclase, found in Crocosphaera subtropica (strain ATCC 51142 / BH68) (Cyanothece sp. (strain ATCC 51142)).